Reading from the N-terminus, the 1457-residue chain is ABC transporter G family member 36 (1457 aa).

Residues 14 to 43 (RLGGSMRGDSGSMWRRGDDVFSRSSREEDD) form a disordered region. A compositionally biased stretch (basic and acidic residues) spans 28 to 39 (RRGDDVFSRSSR). The 274-residue stretch at 164 to 437 (GNALGILPNR…FESTGFKCPD (274 aa)) folds into the ABC transporter 1 domain. An ATP-binding site is contributed by 197 to 204 (GPPGSGKT). The ABC transmembrane type-2 1 domain maps to 515 to 728 (ELLKANIDRE…AQNAISVNEL (214 aa)). Transmembrane regions (helical) follow at residues 533-553 (FVYMFRTFQLMVVSLIAMTLF), 565-585 (SGGIYMGALFFGVLMIMFNGF), 621-641 (IPITFIEVGGYVFLTYYVIGF), 653-673 (LLMLAINQMAGSLFRFIGGAA), 677-697 (IVANVFASFMLLIFMVLGGFI), 706-726 (WWIWGYWISPMMYAQNAISVN), and 765-785 (IGFGAMIGFTILFNALFTLAL). The segment at 821-841 (SSGSTRRPMGNGTENDSTIVD) is disordered. The ABC transporter 2 domain maps to 860–1112 (LSFDNVRYSV…ELIKYFESIP (253 aa)). 905 to 912 (GVSGAGKT) serves as a coordination point for ATP. The ABC transmembrane type-2 2 domain maps to 1185–1399 (TQCMACLWKQ…TLYGLVVSQF (215 aa)). Transmembrane regions (helical) follow at residues 1209–1229 (FFFTTVIALLFGTIFWDLGGK), 1244–1264 (YAAVLFIGVMNCTSVQPVVAV), 1292–1312 (IPYTLVQATVYGIIVYAMIGF), 1319–1339 (FFWYLFFMVFTLLYFTFYGMM), 1349–1369 (IASIVSSAFYAIWNLFSGFVI), 1380–1400 (WYCWACPVAWTLYGLVVSQFG), and 1429–1449 (WVATVVAAFAFLFASLFGFAI).

Belongs to the ABC transporter superfamily. ABCG family. PDR (TC 3.A.1.205) subfamily.

Its subcellular location is the membrane. In terms of biological role, may be a general defense protein. The chain is ABC transporter G family member 36 from Oryza sativa subsp. indica (Rice).